We begin with the raw amino-acid sequence, 669 residues long: Methionine--tRNA ligase (669 aa).

The 'HIGH' region signature appears at 15-25 (PYANGPAHIGH). Zn(2+)-binding residues include C146, C149, C158, and C162. The 'KMSKS' region signature appears at 328–332 (KFSKS). K331 is a binding site for ATP. A tRNA-binding domain is found at 570 to 669 (QFKALDLRVG…KEVPAGCGIR (100 aa)).

Belongs to the class-I aminoacyl-tRNA synthetase family. MetG type 1 subfamily. In terms of assembly, homodimer. It depends on Zn(2+) as a cofactor.

It localises to the cytoplasm. The enzyme catalyses tRNA(Met) + L-methionine + ATP = L-methionyl-tRNA(Met) + AMP + diphosphate. Its function is as follows. Is required not only for elongation of protein synthesis but also for the initiation of all mRNA translation through initiator tRNA(fMet) aminoacylation. In Methanothrix thermoacetophila (strain DSM 6194 / JCM 14653 / NBRC 101360 / PT) (Methanosaeta thermophila), this protein is Methionine--tRNA ligase.